The sequence spans 2316 residues: Receptor-type tyrosine-protein phosphatase zeta (2316 aa).

Positions Met-1–Gly-24 are cleaved as a signal peptide. Residues Tyr-25–Lys-1637 are Extracellular-facing. Residues Ile-36–Tyr-300 enclose the Alpha-carbonic anhydrase domain. 2 cysteine pairs are disulfide-bonded: Cys-56/Cys-240 and Cys-133/Cys-264. Residues Asn-105, Asn-134, Asn-223, Asn-232, Asn-324, Asn-381, and Asn-497 are each glycosylated (N-linked (GlcNAc...) asparagine). Positions Glu-314 to Ala-413 constitute a Fibronectin type-III domain. 2 disordered regions span residues Tyr-433–Ser-499 and Leu-518–Ser-537. N-linked (GlcNAc...) asparagine glycosylation is present at Asn-552. A phosphoserine mark is found at Ser-572 and Ser-576. Disordered stretches follow at residues Lys-586 to Ala-624 and Arg-636 to His-720. Positions Asp-592–Ser-602 are enriched in low complexity. Ser-595 carries an O-linked (Xyl...) (chondroitin sulfate) serine glycan. The span at Thr-603–Thr-621 shows a compositional bias: polar residues. The N-linked (GlcNAc...) asparagine glycan is linked to Asn-610. Ser-645 is subject to Phosphoserine; alternate. O-linked (Xyl...) (chondroitin sulfate) serine; alternate glycosylation is present at Ser-645. Ser-647 carries the phosphoserine modification. The segment covering Thr-666–Gly-675 has biased composition (polar residues). Residue Asn-685 is glycosylated (N-linked (GlcNAc...) asparagine). A compositionally biased stretch (polar residues) spans Glu-699–Pro-711. Asn-786 carries an N-linked (GlcNAc...) asparagine glycan. Ser-1005 carries O-linked (Xyl...) (chondroitin sulfate) serine glycosylation. Residues Asn-1025 and Asn-1058 are each glycosylated (N-linked (GlcNAc...) asparagine). 4 disordered regions span residues Gln-1141–Ser-1172, Lys-1204–Ser-1228, Leu-1401–Glu-1521, and Thr-1545–His-1622. The span at Leu-1152–Ser-1172 shows a compositional bias: polar residues. A compositionally biased stretch (polar residues) spans Leu-1401–Ser-1413. Residues Glu-1425 to Asp-1439 are compositionally biased toward acidic residues. Asn-1463 carries an N-linked (GlcNAc...) asparagine glycan. Residues Asp-1464 to Pro-1478 show a composition bias toward polar residues. O-linked (Xyl...) (chondroitin sulfate) serine glycans are attached at residues Ser-1550 and Ser-1552. Composition is skewed to polar residues over residues Gly-1555 to Phe-1569 and Pro-1595 to Val-1609. N-linked (GlcNAc...) asparagine glycosylation occurs at Asn-1563. The segment covering Ser-1610–Ser-1621 has biased composition (low complexity). Residues Asn-1611 and Asn-1619 are each glycosylated (N-linked (GlcNAc...) asparagine). Residues Ala-1638–Trp-1663 traverse the membrane as a helical segment. The Cytoplasmic segment spans residues Arg-1664–Val-2316. 2 positions are modified to phosphothreonine: Thr-1685 and Thr-1688. 2 Tyrosine-protein phosphatase domains span residues Phe-1718 to Ala-1993 and Leu-2024 to Leu-2283. Residues Asp-1902, Cys-1934 to Arg-1940, and Gln-1978 each bind substrate. The active-site Phosphocysteine intermediate is Cys-1934. Ser-2056 is subject to Phosphoserine.

It belongs to the protein-tyrosine phosphatase family. Receptor class 5 subfamily. As to quaternary structure, interacts with tenascin. Interacts with N-CAM and NG-CAM. The carbonic-anhydrase like domain interacts with CNTN1 (contactin). Interacts with PTN. Interaction with PTN promotes formation of homooligomers; oligomerization impairs phosphatase activity. Interacts (via chondroitin sulfate chains) with MDK (via C-terminal); this interaction is inhibited by PTN; this interaction promotes neuronal migration. As to expression, nervous tissue specific.

It is found in the cell membrane. The protein resides in the secreted. The enzyme catalyses O-phospho-L-tyrosyl-[protein] + H2O = L-tyrosyl-[protein] + phosphate. Functionally, protein tyrosine phosphatase that negatively regulates oligodendrocyte precursor proliferation in the embryonic spinal cord. Required for normal differentiation of the precursor cells into mature, fully myelinating oligodendrocytes. May play a role in protecting oligondendrocytes against apoptosis. May play a role in the establishment of contextual memory, probably via the dephosphorylation of proteins that are part of important signaling cascades. In terms of biological role, isoform 3 (phosphacan), previously designated 3F8 chondroitin sulfate proteoglycan or 3H1 keratan sulfate proteoglycan depending on the glycosylation status, is a soluble nervous tissue-specific proteoglycan. It is synthesized by glia and binds to neurons and to the neural cell adhesion molecules tenascin, N-CAM or NG-CAM but not to laminin and fibronectin. Phosphacan acts as a potent inhibitor of cell adhesion and neurite outgrowth. In Rattus norvegicus (Rat), this protein is Receptor-type tyrosine-protein phosphatase zeta (Ptprz1).